A 265-amino-acid chain; its full sequence is Ribosomal RNA small subunit methyltransferase A (265 aa).

Asn13, Leu15, Gly40, Glu61, Asp85, and Asn103 together coordinate S-adenosyl-L-methionine.

Belongs to the class I-like SAM-binding methyltransferase superfamily. rRNA adenine N(6)-methyltransferase family. RsmA subfamily.

It localises to the cytoplasm. The catalysed reaction is adenosine(1518)/adenosine(1519) in 16S rRNA + 4 S-adenosyl-L-methionine = N(6)-dimethyladenosine(1518)/N(6)-dimethyladenosine(1519) in 16S rRNA + 4 S-adenosyl-L-homocysteine + 4 H(+). Specifically dimethylates two adjacent adenosines (A1518 and A1519) in the loop of a conserved hairpin near the 3'-end of 16S rRNA in the 30S particle. May play a critical role in biogenesis of 30S subunits. This is Ribosomal RNA small subunit methyltransferase A from Aromatoleum aromaticum (strain DSM 19018 / LMG 30748 / EbN1) (Azoarcus sp. (strain EbN1)).